We begin with the raw amino-acid sequence, 984 residues long: G patch domain-containing protein TGH homolog (984 aa).

The segment covering 130–144 has biased composition (basic and acidic residues); sequence EHARKQASKEQKERP. A disordered region spans residues 130–153; it reads EHARKQASKEQKERPSAIPGPIPD. The 43-residue stretch at 160 to 202 folds into the G-patch domain; that stretch reads TTSIGVKLLMKMGWRQGRSIRDAHADSLYESRREARKAFLALS. An SURP motif repeat occupies 408–450; the sequence is LIEGCAAMVARCGKHIEDFYKEKSKTNTQFNFLNEGDGCSYYA. 4 disordered regions span residues 464–503, 679–717, 775–806, and 820–984; these read QKPD…SSFP, TRTN…ESSS, LGLD…GISR, and ESAL…HHKR. A compositionally biased stretch (basic and acidic residues) spans 473–495; that stretch reads SSDKLTAENRGKILGERPLDRST. Residues 679–695 show a composition bias toward polar residues; it reads TRTNEVESSSIAPQHTS. A compositionally biased stretch (low complexity) spans 697 to 709; sequence AGATETEAKGAAT. Residues 814 to 859 are a coiled coil; it reads QEIKENESALDKEEIANASADVPSDNVEELGLKYEKQEHRAEKSRS. Residues 843–858 show a composition bias toward basic and acidic residues; the sequence is LGLKYEKQEHRAEKSR. 3 stretches are compositionally biased toward basic residues: residues 882–892, 905–922, and 934–946; these read SRERRSRHKIR, HRSK…RRSR, and TKRK…HHRT. Residues 947–974 show a composition bias toward basic and acidic residues; the sequence is RNPDTDSSDHEYEERHKSSSRRSSDKDR. A compositionally biased stretch (basic residues) spans 975-984; that stretch reads SRRRSRHHKR.

It localises to the nucleus. Functionally, functions as a component of microRNA (miRNA) and small interfering RNA (siRNA) biogenesis. May assist Dicer-like (DCL) proteins to efficiently process and/or recruit the precursors of miRNAs and siRNAs. This Oryza sativa subsp. japonica (Rice) protein is G patch domain-containing protein TGH homolog.